Consider the following 165-residue polypeptide: Transcription antitermination protein NusB (165 aa).

A disordered region spans residues 139-165; the sequence is EAVRSHRRNKRPAADKPVATDKPAAAE.

The protein belongs to the NusB family.

Its function is as follows. Involved in transcription antitermination. Required for transcription of ribosomal RNA (rRNA) genes. Binds specifically to the boxA antiterminator sequence of the ribosomal RNA (rrn) operons. The protein is Transcription antitermination protein NusB of Laribacter hongkongensis (strain HLHK9).